Reading from the N-terminus, the 185-residue chain is Orotate phosphoribosyltransferase (185 aa).

5-phospho-alpha-D-ribose 1-diphosphate is bound by residues arginine 102, lysine 103, lysine 106, histidine 108, and 128–136; that span reads DDVITTGGS. The orotate site is built by threonine 132 and arginine 160.

This sequence belongs to the purine/pyrimidine phosphoribosyltransferase family. PyrE subfamily. As to quaternary structure, homodimer. The cofactor is Mg(2+).

It carries out the reaction orotidine 5'-phosphate + diphosphate = orotate + 5-phospho-alpha-D-ribose 1-diphosphate. It participates in pyrimidine metabolism; UMP biosynthesis via de novo pathway; UMP from orotate: step 1/2. Catalyzes the transfer of a ribosyl phosphate group from 5-phosphoribose 1-diphosphate to orotate, leading to the formation of orotidine monophosphate (OMP). The polypeptide is Orotate phosphoribosyltransferase (Leptospira biflexa serovar Patoc (strain Patoc 1 / Ames)).